The following is a 579-amino-acid chain: MDDKHQQRNLVIVTILSALILFGWSFVTKHWLSTPPAPTQQGKNQPKAELTAEESGDKPLKPVDQVLQETPRLPILTESVEGSVNLKGLRLDDLTLIRHRETLAKNSPAVRLFSPAGTENAWFTSFGWTGENVALPNADSLWKADSDKLTADHPVNFYWNNQQGQIFRITLSVDHDYMFNATESVINRGNSPVIVQPYVLTNHQGVFKTASSWTLHTGPIGVFNGSVNYHVDFADIDKATNNSIRNNTQGGWIGFSDKYWLTALAPHNQKIAIDTDFRSSSNHHYQADFTVAPVVVAAGKTASTSVDVFAGAKEVRVLDRYRDQLHLPHFDKAIDWGWFAIIEKVFFYYLDWLFLHVGNYGLAIILMVFTIRALIFPIANKQYASMASMRRLQPKMQAVRERYKNDEARMRQELVTLYQKEKVNPFAGCLPMFIQFPIFIALYKTLLVTIESRHQPFILWIKDLSAPDPLTPFNLFGLLHFTPPHFLMIGVLPIILGITMWLQFRASPQQLEPAQQQIMSFLPLISVIFMAPLAAGLQVYYIFNNLISLAQMMWLQHRHSTPEERQDRAERKRPSKKKA.

Residues 10 to 30 form a helical membrane-spanning segment; the sequence is LVIVTILSALILFGWSFVTKH. The tract at residues 35 to 61 is disordered; the sequence is PPAPTQQGKNQPKAELTAEESGDKPLK. 5 helical membrane-spanning segments follow: residues 330 to 350, 351 to 371, 423 to 443, 478 to 498, and 523 to 543; these read FDKA…FYYL, DWLF…VFTI, VNPF…IALY, LLHF…ILGI, and PLIS…YYIF. Basic and acidic residues predominate over residues 560–572; that stretch reads STPEERQDRAERK. Residues 560-579 form a disordered region; it reads STPEERQDRAERKRPSKKKA.

This sequence belongs to the OXA1/ALB3/YidC family. Type 1 subfamily. In terms of assembly, interacts with the Sec translocase complex via SecD. Specifically interacts with transmembrane segments of nascent integral membrane proteins during membrane integration.

The protein localises to the cell inner membrane. Its function is as follows. Required for the insertion and/or proper folding and/or complex formation of integral membrane proteins into the membrane. Involved in integration of membrane proteins that insert both dependently and independently of the Sec translocase complex, as well as at least some lipoproteins. Aids folding of multispanning membrane proteins. This Zymomonas mobilis subsp. mobilis (strain ATCC 31821 / ZM4 / CP4) protein is Membrane protein insertase YidC.